The primary structure comprises 483 residues: Cobyric acid synthase (483 aa).

One can recognise a GATase cobBQ-type domain in the interval 252–430 (ALQVVAVAYP…LHRLFDSGPF (179 aa)). Cys-333 serves as the catalytic Nucleophile. His-422 is a catalytic residue.

This sequence belongs to the CobB/CobQ family. CobQ subfamily.

It functions in the pathway cofactor biosynthesis; adenosylcobalamin biosynthesis. Its function is as follows. Catalyzes amidations at positions B, D, E, and G on adenosylcobyrinic A,C-diamide. NH(2) groups are provided by glutamine, and one molecule of ATP is hydrogenolyzed for each amidation. This is Cobyric acid synthase from Halorhodospira halophila (strain DSM 244 / SL1) (Ectothiorhodospira halophila (strain DSM 244 / SL1)).